Reading from the N-terminus, the 444-residue chain is DNA repair protein RadA (444 aa).

Residues 10–27 (CQECGYKSVKWLGKCPSC) form a C4-type zinc finger. Residue 91–98 (GEPGIGKS) coordinates ATP. The short motif at 247 to 251 (KNRFG) is the RadA KNRFG motif element. Residues 345–444 (DVFVNVAGGM…HIQEAIEVLF (100 aa)) form a lon-protease-like region.

This sequence belongs to the RecA family. RadA subfamily.

Functionally, DNA-dependent ATPase involved in processing of recombination intermediates, plays a role in repairing DNA breaks. Stimulates the branch migration of RecA-mediated strand transfer reactions, allowing the 3' invading strand to extend heteroduplex DNA faster. Binds ssDNA in the presence of ADP but not other nucleotides, has ATPase activity that is stimulated by ssDNA and various branched DNA structures, but inhibited by SSB. Does not have RecA's homology-searching function. In Aquifex aeolicus (strain VF5), this protein is DNA repair protein RadA.